Here is a 282-residue protein sequence, read N- to C-terminus: Large ribosomal subunit protein uL2 (282 aa).

Disordered regions lie at residues 31–56 and 226–282; these read EKSL…RHRG and SVMN…GSKM. Residues 35–44 show a composition bias toward polar residues; it reads LDSQSHSAGR. Positions 257-266 are enriched in basic residues; the sequence is TVGKKTRSKK.

It belongs to the universal ribosomal protein uL2 family. Part of the 50S ribosomal subunit. Forms a bridge to the 30S subunit in the 70S ribosome.

Functionally, one of the primary rRNA binding proteins. Required for association of the 30S and 50S subunits to form the 70S ribosome, for tRNA binding and peptide bond formation. It has been suggested to have peptidyltransferase activity; this is somewhat controversial. Makes several contacts with the 16S rRNA in the 70S ribosome. The chain is Large ribosomal subunit protein uL2 from Levilactobacillus brevis (strain ATCC 367 / BCRC 12310 / CIP 105137 / JCM 1170 / LMG 11437 / NCIMB 947 / NCTC 947) (Lactobacillus brevis).